We begin with the raw amino-acid sequence, 231 residues long: S-norcoclaurine synthase 2 (231 aa).

Tyrosine 107–glutamate 109 serves as a coordination point for dopamine. The active-site Proton donor is lysine 121. Residue aspartate 140 coordinates (4-hydroxyphenyl)acetaldehyde. The helical transmembrane segment at leucine 210 to proline 230 threads the bilayer.

Belongs to the BetVI family. As to expression, expressed in roots, stems and leaves. Detected in flower buds and germinating seeds. Low expression in carpels. Restricted to sieve elements of the phloem adjacent or proximal to laticifers.

Its subcellular location is the endoplasmic reticulum membrane. It is found in the vacuole membrane. The catalysed reaction is (4-hydroxyphenyl)acetaldehyde + dopamine = (S)-norcoclaurine + H2O. Its pathway is alkaloid biosynthesis; (S)-reticuline biosynthesis. Activity doubles within 5 hours of elicitor treatment and continues to increase for at least 80 hours. In terms of biological role, involved in the biosynthesis of (S)-coclaurine, the common precursor of all benzylisoquinoline alkaloids such as morphine, sanguinarine, codeine or papaverine. Condenses dopamine and 4-hydroxyphenylacetaldehyde. This is S-norcoclaurine synthase 2 from Papaver somniferum (Opium poppy).